Reading from the N-terminus, the 212-residue chain is Cytidylate kinase (212 aa).

9 to 17 (GPAAAGKGT) is an ATP binding site.

Belongs to the cytidylate kinase family. Type 1 subfamily.

The protein localises to the cytoplasm. It catalyses the reaction CMP + ATP = CDP + ADP. The catalysed reaction is dCMP + ATP = dCDP + ADP. The polypeptide is Cytidylate kinase (Rhizobium meliloti (strain 1021) (Ensifer meliloti)).